The sequence spans 167 residues: Intermembrane phospholipid transport system binding protein MlaD (167 aa).

Residues Met-1–Lys-6 lie on the Cytoplasmic side of the membrane. Residues Tyr-7–Leu-27 form a helical; Signal-anchor for type II membrane protein membrane-spanning segment. The Periplasmic segment spans residues Arg-28–Gln-167. An MCE/MlaD region spans residues Ser-40–Gly-118.

This sequence belongs to the MlaD family. In terms of assembly, the complex is composed of two ATP-binding proteins (MlaF), two transmembrane proteins (MlaE), two cytoplasmic solute-binding proteins (MlaB) and six periplasmic solute-binding proteins (MlaD).

The protein localises to the cell inner membrane. In terms of biological role, part of the ABC transporter complex MlaFEDB, which is involved in a phospholipid transport pathway that maintains lipid asymmetry in the outer membrane by retrograde trafficking of phospholipids from the outer membrane to the inner membrane. MlaD functions in substrate binding with strong affinity for phospholipids and modulates ATP hydrolytic activity of the complex. This is Intermembrane phospholipid transport system binding protein MlaD from Haemophilus influenzae (strain ATCC 51907 / DSM 11121 / KW20 / Rd).